The following is a 210-amino-acid chain: Thymidylate kinase (210 aa).

Position 10–17 (10–17 (GPEGAGKS)) interacts with ATP.

This sequence belongs to the thymidylate kinase family.

It catalyses the reaction dTMP + ATP = dTDP + ADP. Its function is as follows. Phosphorylation of dTMP to form dTDP in both de novo and salvage pathways of dTTP synthesis. This Pseudomonas fluorescens (strain Pf0-1) protein is Thymidylate kinase.